The sequence spans 327 residues: GMP reductase (327 aa).

The active-site Thioimidate intermediate is Cys176. 205–228 (IIADGGIRTHGDIAKSIRFGATMV) is an NADP(+) binding site.

It belongs to the IMPDH/GMPR family. GuaC type 2 subfamily.

The catalysed reaction is IMP + NH4(+) + NADP(+) = GMP + NADPH + 2 H(+). Catalyzes the irreversible NADPH-dependent deamination of GMP to IMP. It functions in the conversion of nucleobase, nucleoside and nucleotide derivatives of G to A nucleotides, and in maintaining the intracellular balance of A and G nucleotides. This is GMP reductase from Streptococcus equi subsp. equi (strain 4047).